The following is a 541-amino-acid chain: Cytochrome P450 monooxygenase claW (541 aa).

The chain crosses the membrane as a helical span at residues valine 12–isoleucine 32. Residue cysteine 480 coordinates heme.

It belongs to the cytochrome P450 family. Heme serves as cofactor.

It localises to the membrane. It functions in the pathway secondary metabolite biosynthesis; terpenoid biosynthesis. In terms of biological role, cytochrome P450 monooxygenase; part of the gene cluster that mediates the biosynthesis of clavilactone A, a meroterpenoid that features a unique benzo-fused ten-membered carbocyclic ring unit with an alpha,beta-epoxy-gamma-lactone moiety, forming an intriguing 10/5/3 tricyclic nested skeleton. Cytochrome P450 monooxygenases claO, claP, claQ, claU, and claW are close orthologs, suggesting that a redundant function or pseudogenes are present in the cla cluster. These monoxygenases are not involved in clavilactone A biosynthesis nor its modification. ClaR, ClaS and ClaT are sufficient to produce clavilactone A. The biosynthesis begins with the prenyltransferase claS that transfers geranyl pyrophosphate (GPP) to hydroquinone to produces geranylhydroquinone. The cytochrome P450 monooxygenase claR then catalyzes the diradical coupling reaction between the intramolecular hydroquinone and allyl moieties to form the benzo-fused ten-membered carbocyclic ring unit of wigantol. Finally the cytochrome P450 monooxygenase claT exquisitely and stereoselectively assembles the alpha,beta-epoxy-gamma-lactone moiety, producing clavilactone A via arnebinol A. The sequence is that of Cytochrome P450 monooxygenase claW from Ampulloclitocybe clavipes (Club foot).